Reading from the N-terminus, the 763-residue chain is Phosphoglycerol transferase I (763 aa).

4 helical membrane passes run 1–21 (MSEL…AWKA), 26–46 (WWFA…ITLY), 77–97 (ILPG…LGWI), and 108–128 (VGYS…SPAF).

This sequence belongs to the OpgB family.

Its subcellular location is the cell inner membrane. It carries out the reaction a phosphatidylglycerol + a membrane-derived-oligosaccharide D-glucose = a 1,2-diacyl-sn-glycerol + a membrane-derived-oligosaccharide 6-(glycerophospho)-D-glucose.. The protein operates within glycan metabolism; osmoregulated periplasmic glucan (OPG) biosynthesis. Functionally, transfers a phosphoglycerol residue from phosphatidylglycerol to the membrane-bound nascent glucan backbones. The chain is Phosphoglycerol transferase I from Salmonella newport (strain SL254).